The chain runs to 63 residues: uncharacterized protein (63 aa).

This is an uncharacterized protein from Rickettsia conorii (strain ATCC VR-613 / Malish 7).